The primary structure comprises 174 residues: Shikimate kinase 2 (174 aa).

Residue 12–17 (GAGKTT) coordinates ATP. Mg(2+)-binding residues include Thr16 and Asp32. Residues Asp34, Arg58, and Gly79 each coordinate substrate. Residues 112–126 (AEDPEEAQRPSLTGK) form an LID domain region. Arg120 serves as a coordination point for ATP. Arg139 lines the substrate pocket. An ATP-binding site is contributed by Gln155.

This sequence belongs to the shikimate kinase family. AroL subfamily. As to quaternary structure, monomer. Requires Mg(2+) as cofactor.

It is found in the cytoplasm. It carries out the reaction shikimate + ATP = 3-phosphoshikimate + ADP + H(+). It functions in the pathway metabolic intermediate biosynthesis; chorismate biosynthesis; chorismate from D-erythrose 4-phosphate and phosphoenolpyruvate: step 5/7. In terms of biological role, catalyzes the specific phosphorylation of the 3-hydroxyl group of shikimic acid using ATP as a cosubstrate. This is Shikimate kinase 2 from Yersinia pestis bv. Antiqua (strain Antiqua).